Here is a 121-residue protein sequence, read N- to C-terminus: Small ribosomal subunit protein uS13 (121 aa).

The segment at 91-121 is disordered; it reads HRMSLPVRGQRTRTNARTRRGSRKTVAGRKK. Residues 100–121 are compositionally biased toward basic residues; the sequence is QRTRTNARTRRGSRKTVAGRKK.

The protein belongs to the universal ribosomal protein uS13 family. In terms of assembly, part of the 30S ribosomal subunit. Forms a loose heterodimer with protein S19. Forms two bridges to the 50S subunit in the 70S ribosome.

In terms of biological role, located at the top of the head of the 30S subunit, it contacts several helices of the 16S rRNA. In the 70S ribosome it contacts the 23S rRNA (bridge B1a) and protein L5 of the 50S subunit (bridge B1b), connecting the 2 subunits; these bridges are implicated in subunit movement. Contacts the tRNAs in the A and P-sites. The sequence is that of Small ribosomal subunit protein uS13 from Prochlorococcus marinus (strain MIT 9211).